A 102-amino-acid chain; its full sequence is uncharacterized protein (102 aa).

Positions 77–102 (RKDGDEKSKPNSKDYASRPIRDHSKI) are disordered.

This is an uncharacterized protein from Microplitis demolitor (Parasitoid wasp).